Reading from the N-terminus, the 516-residue chain is uncharacterized protein (516 aa).

The next 5 membrane-spanning stretches (helical) occupy residues 10 to 27 (IRYPELALFLVIAAGYWI), 32 to 54 (IGAFSLGPVTGALFAGLVVGDFA), 64 to 83 (SFLFLLFLFGVGYSVGPQFV), 95 to 117 (LLAVVVCLTGLAAAIAVGRILGL), and 165 to 187 (AVCYIFGYAGVIMWCTVVAPALL). RCK C-terminal domains are found at residues 208 to 291 (KPGL…SRAE) and 296 to 376 (RELL…NIGV). Helical transmembrane passes span 386 to 408 (FVVLGLAIFFGGVVGVLVSFPVG), 412 to 430 (IALSTSVGTLLAGLLVGHL), 443 to 465 (GAISLMTSLGLAAFVGLTGIHAG), and 480 to 502 (LLGGMVVTLLPQIVGFCFGHFVL).

The protein belongs to the AAE transporter (TC 2.A.81) family.

The protein localises to the cell membrane. This is an uncharacterized protein from Bradyrhizobium diazoefficiens (strain JCM 10833 / BCRC 13528 / IAM 13628 / NBRC 14792 / USDA 110).